Consider the following 145-residue polypeptide: Angiogenin (145 aa).

Positions 1 to 24 (MAISPGPLFLIFVLGLVVIPPTLA) are cleaved as a signal peptide. Glutamine 25 bears the Pyrrolidone carboxylic acid mark. Histidine 37 (proton acceptor) is an active-site residue. Residues arginine 45 and aspartate 46 each contribute to the tRNA site. Disulfide bonds link cysteine 50/cysteine 104, cysteine 63/cysteine 115, and cysteine 81/cysteine 130. Residues 55–59 (KRRSL) carry the Nucleolar localization signal motif. The tRNA site is built by cysteine 104 and valine 126. Histidine 137 acts as the Proton donor in catalysis.

The protein belongs to the pancreatic ribonuclease family. Homodimer. Interacts with RNH1; inhibiting ANG ribonuclease activity. Interacts with PCNA.

Its subcellular location is the secreted. The protein localises to the nucleus. It localises to the nucleolus. The protein resides in the cytoplasm. It is found in the stress granule. With respect to regulation, has weak tRNA ribonuclease activity by itself due to partial autoinhibition by its C-terminus (residues 139-145), which folds into a short alpha-helix that partially occludes the substrate-binding site. In absence of stress, the ribonuclease activity is inhibited by RNH1 in the cytoplasm. In response to stress, dissociates from RNH1 in the cytoplasm and associates with cytoplasmic ribosomes with vacant A-sites: ribosomes directly activate the tRNA ribonuclease activity of ANG by refolding the C-terminal alpha-helix. In response to stress, the angiogenic activity of ANG is inhibited by RNH1 in the nucleus. In terms of biological role, secreted ribonuclease that can either promote or restrict cell proliferation of target cells, depending on the context. Endocytosed in target cells via its receptor PLXNB2 and translocates to the cytoplasm or nucleus. Under stress conditions, localizes to the cytoplasm and promotes the assembly of stress granules (SGs): specifically cleaves a subset of tRNAs within anticodon loops to produce tRNA-derived stress-induced fragments (tiRNAs), resulting in translation repression and inhibition of cell proliferation. tiRNas also prevent formation of apoptosome, thereby promoting cell survival. Preferentially cleaves RNAs between a pyrimidine and an adenosine residue, suggesting that it cleaves the anticodon loop of tRNA(Ala) (32-UUAGCAU-38) after positions 33 and 36. Cleaves a subset of tRNAs, including tRNA(Ala), tRNA(Glu), tRNA(Gly), tRNA(Lys), tRNA(Val), tRNA(His), tRNA(Asp) and tRNA(Sec). Under growth conditions and in differentiated cells, translocates to the nucleus and stimulates ribosomal RNA (rRNA) transcription, including that containing the initiation site sequences of 45S rRNA, thereby promoting cell growth and proliferation. Angiogenin induces vascularization of normal and malignant tissues via its ability to promote rRNA transcription. Involved in hematopoietic stem and progenitor cell (HSPC) growth and survival by promoting rRNA transcription in growth conditions and inhibiting translation in response to stress, respectively. Mediates the crosstalk between myeloid and intestinal epithelial cells to protect the intestinal epithelial barrier integrity: secreted by myeloid cells and promotes intestinal epithelial cells proliferation and survival. Also mediates osteoclast-endothelial cell crosstalk in growing bone: produced by osteoclasts and protects the neighboring vascular cells against senescence by promoting rRNA transcription. In Mus musculus (Mouse), this protein is Angiogenin.